Consider the following 800-residue polypeptide: Metabotropic glutamate receptor-like protein C (800 aa).

The signal sequence occupies residues 1–21 (MKMKIIFLILILIFSINIIKC). Over 22 to 392 (DKEFKMLTLL…EVEFSQSLQY (371 aa)) the chain is Extracellular. Residues asparagine 69, asparagine 107, asparagine 166, asparagine 258, asparagine 276, asparagine 302, and asparagine 345 are each glycosylated (N-linked (GlcNAc...) asparagine). Residues 393-413 (GFSITTGVLIAITIIMMLGIV) traverse the membrane as a helical segment. Topologically, residues 414–426 (RYKSTPSIRSASP) are cytoplasmic. Residues 427–447 (IFLNFILAGGIIVYIGIIVWV) form a helical membrane-spanning segment. Over 448 to 463 (GPANDHQCNARLWLVT) the chain is Extracellular. The helical transmembrane segment at 464–484 (LGFSTLIGSLVVKNFRIWLIF) threads the bilayer. Residues 485 to 499 (DNPELKSISITNYQL) lie on the Cytoplasmic side of the membrane. A helical transmembrane segment spans residues 500–520 (FPWVGACLVINIILMSILTSV). Residues 521–551 (GDLREIDAQGIDSLGKYEFMKVCKMNSSGAS) lie on the Extracellular side of the membrane. N-linked (GlcNAc...) asparagine glycosylation occurs at asparagine 546. A helical membrane pass occupies residues 552–572 (TLYTILAYFAALLLVGVFVSW). The Cytoplasmic segment spans residues 573–586 (KIRIVDIQEFNESK). The chain crosses the membrane as a helical span at residues 587 to 607 (AIANTLYAISFCLFVIVPLMI). At 608–616 (SPQDKQSET) the chain is on the extracellular side. A helical transmembrane segment spans residues 617–637 (IVLCTAGLFITTAALLIIFTP). Residues 638 to 800 (KFWRVFTLGD…NDTEEEDKNQ (163 aa)) are Cytoplasmic-facing. 2 disordered regions span residues 658-694 (QSNV…TETS) and 718-800 (EFDD…DKNQ). The segment covering 718–732 (EFDDNNIEQDNDNDN) has biased composition (acidic residues). Residues 733 to 774 (DNNNNNNNNNNNNNNNNNNNNNNNNNNNNNNNNNNNNNNNNN) show a composition bias toward low complexity. Over residues 781-791 (NDEKVEEKQQN) the composition is skewed to basic and acidic residues.

The protein in the N-terminal section; belongs to the BMP lipoprotein family. In the C-terminal section; belongs to the G-protein coupled receptor 3 family. GABA-B receptor subfamily.

It is found in the membrane. This is Metabotropic glutamate receptor-like protein C (grlC) from Dictyostelium discoideum (Social amoeba).